Here is a 352-residue protein sequence, read N- to C-terminus: Alanine racemase (352 aa).

The active-site Proton acceptor; specific for D-alanine is the Lys33. Lys33 bears the N6-(pyridoxal phosphate)lysine mark. Residue Arg129 participates in substrate binding. Residue Tyr250 is the Proton acceptor; specific for L-alanine of the active site. Met298 contributes to the substrate binding site.

This sequence belongs to the alanine racemase family. It depends on pyridoxal 5'-phosphate as a cofactor.

It carries out the reaction L-alanine = D-alanine. It participates in amino-acid biosynthesis; D-alanine biosynthesis; D-alanine from L-alanine: step 1/1. In terms of biological role, catalyzes the interconversion of L-alanine and D-alanine. May also act on other amino acids. The sequence is that of Alanine racemase (alr) from Neisseria meningitidis serogroup C / serotype 2a (strain ATCC 700532 / DSM 15464 / FAM18).